The primary structure comprises 491 residues: Zinc finger protein 655 (491 aa).

The disordered stretch occupies residues 1-52 (MEEIPAQEAAGSPRVQFQSLETQSECLSPEPQFVQDTDMEQGLTGDGETREE). Residues 15 to 26 (VQFQSLETQSEC) show a composition bias toward polar residues. Position 60 is a phosphoserine (Q60). Residues K77, K190, and K201 each participate in a glycyl lysine isopeptide (Lys-Gly) (interchain with G-Cter in SUMO2) cross-link. C2H2-type zinc fingers lie at residues 212–234 (YKCD…QRIH), 240–262 (YKCK…KRIH), 303–325 (YKCS…QKIH), 330–353 (CKCT…RVHH), 380–402 (YTCS…QRIH), and 408–430 (HECN…HKMH).

Belongs to the krueppel C2H2-type zinc-finger protein family. In terms of assembly, interacts with VAV1 and CDK4. Interacts with INTS13; promoting association with the integrator complex.

It localises to the nucleus. Functionally, probable transcription factor. The protein is Zinc finger protein 655 of Homo sapiens (Human).